A 785-amino-acid chain; its full sequence is Conserved oligomeric Golgi complex subunit 4 (785 aa).

Residues 1 to 24 (MADLDSPPKLSGVQQPSEGVGGGR) are disordered. At alanine 2 the chain carries N-acetylalanine. The interval 2 to 84 (ADLDSPPKLS…VTLHRMGPNL (83 aa)) is interaction with SCFD1. Position 6 is a phosphoserine (serine 6). The interaction with STX5 stretch occupies residues 85–153 (QLIEGDAKQL…TALRSEDYEQ (69 aa)). The tract at residues 618–740 (PQVQPWINSF…SQMATILNLE (123 aa)) is d domain. Residues 741–785 (RVTEILDYWGPNSGPLTWRLTPAEVRQVLALRIDFRSEDIKRLRL) form an e domain; essential for proper cell surface glycosylation region.

The protein belongs to the COG4 family. As to quaternary structure, monomer. Component of the conserved oligomeric Golgi (COG) complex which is composed of eight different subunits and is required for normal Golgi morphology and localization. Mediates interaction of SCFD1 with the COG complex. Interacts with STX5.

The protein localises to the cytoplasm. The protein resides in the cytosol. Its subcellular location is the golgi apparatus membrane. Required for normal Golgi function. Plays a role in SNARE-pin assembly and Golgi-to-ER retrograde transport via its interaction with SCFD1. The polypeptide is Conserved oligomeric Golgi complex subunit 4 (COG4) (Homo sapiens (Human)).